The chain runs to 210 residues: Cytochrome c biogenesis ATP-binding export protein CcmA (210 aa).

Positions 4 to 207 (LAVRDLAVAR…RQSRPAGFNE (204 aa)) constitute an ABC transporter domain. 36 to 43 (GPNGIGKT) contacts ATP.

It belongs to the ABC transporter superfamily. CcmA exporter (TC 3.A.1.107) family. As to quaternary structure, the complex is composed of two ATP-binding proteins (CcmA) and two transmembrane proteins (CcmB).

The protein localises to the cell inner membrane. The enzyme catalyses heme b(in) + ATP + H2O = heme b(out) + ADP + phosphate + H(+). Functionally, part of the ABC transporter complex CcmAB involved in the biogenesis of c-type cytochromes; once thought to export heme, this seems not to be the case, but its exact role is uncertain. Responsible for energy coupling to the transport system. The protein is Cytochrome c biogenesis ATP-binding export protein CcmA of Paracoccus denitrificans (strain Pd 1222).